We begin with the raw amino-acid sequence, 170 residues long: Keratin-associated protein 9-2 (170 aa).

A run of 17 repeats spans residues 8–12 (CCQPT), 13–17 (CCRTT), 18–22 (CCRTT), 37–41 (CCQPT), 42–46 (CCVSS), 51–55 (CCCPT), 61–65 (CCRTT), 66–70 (CCQPT), 75–79 (CYQPS), 80–84 (CCSTP), 85–89 (CCQPT), 90–94 (CCGSS), 95–99 (CCGQT), 140–144 (CCHPA), 145–149 (CCETT), 150–154 (CCRTT), and 164–168 (CCQPS). A 17 X 5 AA repeats of C-C-[RQVSGE]-[SPTQ]-[TASP] region spans residues 8-168 (CCQPTCCRTT…TCVSSCCQPS (161 aa)).

It belongs to the KRTAP type 9 family. As to quaternary structure, interacts with hair keratins.

Its function is as follows. In the hair cortex, hair keratin intermediate filaments are embedded in an interfilamentous matrix, consisting of hair keratin-associated proteins (KRTAP), which are essential for the formation of a rigid and resistant hair shaft through their extensive disulfide bond cross-linking with abundant cysteine residues of hair keratins. The matrix proteins include the high-sulfur and high-glycine-tyrosine keratins. The protein is Keratin-associated protein 9-2 (KRTAP9-2) of Pan troglodytes (Chimpanzee).